The chain runs to 211 residues: Urease accessory protein UreG (211 aa).

A GTP-binding site is contributed by 11–18 (GPVGSGKT).

The protein belongs to the SIMIBI class G3E GTPase family. UreG subfamily. Homodimer. UreD, UreF and UreG form a complex that acts as a GTP-hydrolysis-dependent molecular chaperone, activating the urease apoprotein by helping to assemble the nickel containing metallocenter of UreC. The UreE protein probably delivers the nickel.

The protein resides in the cytoplasm. Functionally, facilitates the functional incorporation of the urease nickel metallocenter. This process requires GTP hydrolysis, probably effectuated by UreG. The sequence is that of Urease accessory protein UreG from Photorhabdus laumondii subsp. laumondii (strain DSM 15139 / CIP 105565 / TT01) (Photorhabdus luminescens subsp. laumondii).